The sequence spans 237 residues: Ribonuclease 3 (237 aa).

The RNase III domain maps to 5–136; it reads VDELSARLGV…VIAALFLDQG (132 aa). Mg(2+) is bound at residue glutamate 49. The active site involves aspartate 53. Mg(2+) contacts are provided by aspartate 122 and glutamate 125. The active site involves glutamate 125. The DRBM domain maps to 163–232; the sequence is DYKSRLQARI…ARAALDALEG (70 aa). The span at 185–208 shows a compositional bias: basic and acidic residues; the sequence is IDRSGPEHRPEFTVEVRAGEERLG. Residues 185–237 form a disordered region; that stretch reads IDRSGPEHRPEFTVEVRAGEERLGTGKGPSKQAAEQAAARAALDALEGGTDGR. Residues 216 to 231 are compositionally biased toward low complexity; that stretch reads QAAEQAAARAALDALE.

The protein belongs to the ribonuclease III family. Homodimer. Mg(2+) serves as cofactor.

The protein resides in the cytoplasm. The catalysed reaction is Endonucleolytic cleavage to 5'-phosphomonoester.. Functionally, digests double-stranded RNA. Involved in the processing of primary rRNA transcript to yield the immediate precursors to the large and small rRNAs (23S and 16S). Processes some mRNAs, and tRNAs when they are encoded in the rRNA operon. Processes pre-crRNA and tracrRNA of type II CRISPR loci if present in the organism. This chain is Ribonuclease 3, found in Roseiflexus sp. (strain RS-1).